Consider the following 299-residue polypeptide: Zinc import ATP-binding protein ZnuC (299 aa).

The region spanning 13 to 228 (VSLANAGVQR…PEYMRLFGGT (216 aa)) is the ABC transporter domain. 45-52 (GPNGSGKS) provides a ligand contact to ATP.

This sequence belongs to the ABC transporter superfamily. Zinc importer (TC 3.A.1.15.5) family. The complex is composed of two ATP-binding proteins (ZnuC), two transmembrane proteins (ZnuB) and a solute-binding protein (ZnuA).

The protein resides in the cell inner membrane. The enzyme catalyses Zn(2+)(out) + ATP(in) + H2O(in) = Zn(2+)(in) + ADP(in) + phosphate(in) + H(+)(in). Part of the ABC transporter complex ZnuABC involved in zinc import. Responsible for energy coupling to the transport system. This Agrobacterium fabrum (strain C58 / ATCC 33970) (Agrobacterium tumefaciens (strain C58)) protein is Zinc import ATP-binding protein ZnuC.